The primary structure comprises 492 residues: ATP synthase subunit beta, chloroplastic (492 aa).

170–177 (GGAGVGKT) is an ATP binding site.

This sequence belongs to the ATPase alpha/beta chains family. In terms of assembly, F-type ATPases have 2 components, CF(1) - the catalytic core - and CF(0) - the membrane proton channel. CF(1) has five subunits: alpha(3), beta(3), gamma(1), delta(1), epsilon(1). CF(0) has four main subunits: a(1), b(1), b'(1) and c(9-12).

The protein localises to the plastid. It is found in the chloroplast thylakoid membrane. It catalyses the reaction ATP + H2O + 4 H(+)(in) = ADP + phosphate + 5 H(+)(out). In terms of biological role, produces ATP from ADP in the presence of a proton gradient across the membrane. The catalytic sites are hosted primarily by the beta subunits. This chain is ATP synthase subunit beta, chloroplastic, found in Angiopteris lygodiifolia (Turnip fern).